The chain runs to 276 residues: Energy-coupling factor transporter ATP-binding protein EcfA2 (276 aa).

One can recognise an ABC transporter domain in the interval 1 to 233; the sequence is MKTPFERLAL…GEEMAGWGLD (233 aa). 27-34 is a binding site for ATP; it reads GHTGSGKS. Glutamate 158 acts as the Proton acceptor in catalysis.

It belongs to the ABC transporter superfamily. Energy-coupling factor EcfA family. In terms of assembly, forms a stable energy-coupling factor (ECF) transporter complex composed of 2 membrane-embedded substrate-binding proteins (S component), 2 ATP-binding proteins (A component) and 2 transmembrane proteins (T component).

The protein resides in the cell membrane. Functionally, ATP-binding (A) component of a common energy-coupling factor (ECF) ABC-transporter complex. Unlike classic ABC transporters this ECF transporter provides the energy necessary to transport a number of different substrates. The chain is Energy-coupling factor transporter ATP-binding protein EcfA2 from Bacillus subtilis (strain 168).